Consider the following 320-residue polypeptide: Putative fatty acid elongase 3 (320 aa).

N-linked (GlcNAc...) asparagine glycosylation occurs at asparagine 14. 6 helical membrane passes run 33 to 53 (WMQN…AVIF), 67 to 87 (LDTP…LGFL), 120 to 140 (FWTE…IFIV), 145 to 165 (PLIF…WHAY), 203 to 223 (MAMV…IIGV), and 242 to 262 (LGLC…FFYH).

Belongs to the ELO family.

Its subcellular location is the membrane. The catalysed reaction is a very-long-chain acyl-CoA + malonyl-CoA + H(+) = a very-long-chain 3-oxoacyl-CoA + CO2 + CoA. It participates in lipid metabolism; fatty acid biosynthesis. Its function is as follows. Could be implicated in synthesis of very long chain fatty acids. May be required for normally rapid growth. The polypeptide is Putative fatty acid elongase 3 (elo-3) (Caenorhabditis elegans).